Reading from the N-terminus, the 365-residue chain is Phospho-N-acetylmuramoyl-pentapeptide-transferase (365 aa).

10 consecutive transmembrane segments (helical) span residues 22-42 (YISV…LALG), 74-94 (TMGG…WGDL), 95-115 (TSIY…IGFF), 133-153 (YKFA…FYLL), 168-188 (SLYI…IING), 201-221 (GLAI…AYIE), 240-260 (LAEV…FLWF), 267-287 (VFMG…IAVM), 292-312 (LIFF…MLQV), and 342-362 (KVVI…LAAI).

The protein belongs to the glycosyltransferase 4 family. MraY subfamily. Requires Mg(2+) as cofactor.

It localises to the cell inner membrane. The catalysed reaction is UDP-N-acetyl-alpha-D-muramoyl-L-alanyl-gamma-D-glutamyl-meso-2,6-diaminopimeloyl-D-alanyl-D-alanine + di-trans,octa-cis-undecaprenyl phosphate = di-trans,octa-cis-undecaprenyl diphospho-N-acetyl-alpha-D-muramoyl-L-alanyl-D-glutamyl-meso-2,6-diaminopimeloyl-D-alanyl-D-alanine + UMP. It participates in cell wall biogenesis; peptidoglycan biosynthesis. Its function is as follows. Catalyzes the initial step of the lipid cycle reactions in the biosynthesis of the cell wall peptidoglycan: transfers peptidoglycan precursor phospho-MurNAc-pentapeptide from UDP-MurNAc-pentapeptide onto the lipid carrier undecaprenyl phosphate, yielding undecaprenyl-pyrophosphoryl-MurNAc-pentapeptide, known as lipid I. The protein is Phospho-N-acetylmuramoyl-pentapeptide-transferase of Francisella tularensis subsp. tularensis (strain WY96-3418).